A 460-amino-acid chain; its full sequence is Pentatricopeptide repeat-containing protein At5g43790 (460 aa).

9 PPR repeats span residues Ser70–Phe107, Asn111–Phe142, Asp149–Pro179, Asp180–Pro214, Asn215–Leu249, Asn250–Arg280, Asp281–Pro315, Asp316–Pro351, and Lys352–Lys382. Positions Leu387–Asn460 are type E motif; degenerate.

This sequence belongs to the PPR family. PCMP-E subfamily.

The protein is Pentatricopeptide repeat-containing protein At5g43790 (PCMP-E30) of Arabidopsis thaliana (Mouse-ear cress).